The primary structure comprises 726 residues: Tripartite terminase subunit 1 (726 aa).

Residues C189–H217 form a C3H1-type zinc finger. Y626–R633 is a binding site for ATP.

It belongs to the herpesviridae TRM1 protein family. Associates with TRM2 and TRM3 to form the tripartite terminase complex. Interacts with portal protein.

It is found in the host nucleus. In terms of biological role, component of the molecular motor that translocates viral genomic DNA in empty capsid during DNA packaging. Forms a tripartite terminase complex together with TRM2 and TRM3 in the host cytoplasm. Once the complex reaches the host nucleus, it interacts with the capsid portal vertex. This portal forms a ring in which genomic DNA is translocated into the capsid. TRM1 carries an endonuclease activity that plays an important role for the cleavage of concatemeric viral DNA into unit length genomes. This chain is Tripartite terminase subunit 1, found in Human herpesvirus 6B (strain Z29) (HHV-6 variant B).